We begin with the raw amino-acid sequence, 282 residues long: Pantothenate synthetase (282 aa).

Position 26-33 (26-33) interacts with ATP; that stretch reads MGNLHEGH. His33 acts as the Proton donor in catalysis. Gln57 is a binding site for (R)-pantoate. Gln57 is a binding site for beta-alanine. ATP is bound at residue 144 to 147; sequence GQKD. Gln150 is a binding site for (R)-pantoate. ATP is bound by residues Leu173 and 181-184; that span reads LSSR.

It belongs to the pantothenate synthetase family. As to quaternary structure, homodimer.

It is found in the cytoplasm. The enzyme catalyses (R)-pantoate + beta-alanine + ATP = (R)-pantothenate + AMP + diphosphate + H(+). It functions in the pathway cofactor biosynthesis; (R)-pantothenate biosynthesis; (R)-pantothenate from (R)-pantoate and beta-alanine: step 1/1. In terms of biological role, catalyzes the condensation of pantoate with beta-alanine in an ATP-dependent reaction via a pantoyl-adenylate intermediate. This chain is Pantothenate synthetase, found in Albidiferax ferrireducens (strain ATCC BAA-621 / DSM 15236 / T118) (Rhodoferax ferrireducens).